Consider the following 264-residue polypeptide: NAD-capped RNA hydrolase NudC (264 aa).

Residues Cys-99 and Cys-102 each contribute to the Zn(2+) site. Glu-112 contributes to the substrate binding site. Zn(2+) contacts are provided by Cys-117 and Cys-120. Residue Tyr-125 participates in substrate binding. The Nudix hydrolase domain maps to 126–253 (PVICPSIIVA…TIARKLIHAT (128 aa)). Positions 162, 178, and 182 each coordinate a divalent metal cation. Positions 163–184 (GFVEVGETFEQAVQREVFEETG) match the Nudix box motif. Position 196 to 203 (196 to 203 (QPWAFPNS)) interacts with substrate. Glu-223 contributes to the a divalent metal cation binding site. Ala-246 is a substrate binding site.

It belongs to the Nudix hydrolase family. NudC subfamily. Homodimer. Mg(2+) serves as cofactor. Mn(2+) is required as a cofactor. It depends on Zn(2+) as a cofactor.

The enzyme catalyses a 5'-end NAD(+)-phospho-ribonucleoside in mRNA + H2O = a 5'-end phospho-adenosine-phospho-ribonucleoside in mRNA + beta-nicotinamide D-ribonucleotide + 2 H(+). The catalysed reaction is NAD(+) + H2O = beta-nicotinamide D-ribonucleotide + AMP + 2 H(+). It carries out the reaction NADH + H2O = reduced beta-nicotinamide D-ribonucleotide + AMP + 2 H(+). In terms of biological role, mRNA decapping enzyme that specifically removes the nicotinamide adenine dinucleotide (NAD) cap from a subset of mRNAs by hydrolyzing the diphosphate linkage to produce nicotinamide mononucleotide (NMN) and 5' monophosphate mRNA. The NAD-cap is present at the 5'-end of some mRNAs and stabilizes RNA against 5'-processing. Has preference for mRNAs with a 5'-end purine. Catalyzes the hydrolysis of a broad range of dinucleotide pyrophosphates. The protein is NAD-capped RNA hydrolase NudC of Haemophilus influenzae (strain PittGG).